Consider the following 621-residue polypeptide: F-box/LRR-repeat protein 4 (621 aa).

At Arg28 the chain carries Asymmetric dimethylarginine. Residues 277 to 332 (NGYFDKLPYELIQLILNHLTLPDLCRLAQTCKLLNQHCCDPLQYIHLNLQPYWAKL) form the F-box domain. LRR repeat units follow at residues 376–397 (ELVR…EIIS), 402–421 (NLQD…AFSH), 427–448 (GLKR…SILN), 452–474 (DLQH…ASMI), 480–501 (KLRT…AELA), 504–524 (CPLL…STGC), 532–558 (LPNL…ASNC), 559–583 (TRLR…LLES), and 584–609 (CKDL…LSAS).

Part of a SCF (SKP1-CUL1-F-box) protein ligase complex. Interacts with FAF2 and VCP. Interacts with PPTC7; this interaction promotes destruction of BNIP3 and NIX and mitophagy suppression.

Its subcellular location is the cytoplasm. It localises to the nucleus. The protein localises to the mitochondrion outer membrane. Functionally, substrate-recognition component of the mitochondria-localized SCF-FBXL4 ubiquitin E3 ligase complex that plays a role in the restriction of mitophagy by controlling the degradation of BNIP3 and NIX mitophagy receptors. Also rescues mitochondrial injury through reverting hyperactivation of DRP1-mediated mitochondrial fission. The protein is F-box/LRR-repeat protein 4 (FBXL4) of Bos taurus (Bovine).